A 678-amino-acid polypeptide reads, in one-letter code: DNA ligase (678 aa).

Residues 47-51 (DSDYD), 96-97 (SL), and Glu-122 each bind NAD(+). Lys-124 functions as the N6-AMP-lysine intermediate in the catalytic mechanism. Arg-145, Glu-182, Lys-300, and Lys-324 together coordinate NAD(+). Cys-418, Cys-421, Cys-436, and Cys-442 together coordinate Zn(2+). Residues 602 to 678 (AYNESFTGKT…ILEDNLKDLL (77 aa)) form the BRCT domain.

The protein belongs to the NAD-dependent DNA ligase family. LigA subfamily. Mg(2+) serves as cofactor. It depends on Mn(2+) as a cofactor.

It carries out the reaction NAD(+) + (deoxyribonucleotide)n-3'-hydroxyl + 5'-phospho-(deoxyribonucleotide)m = (deoxyribonucleotide)n+m + AMP + beta-nicotinamide D-nucleotide.. DNA ligase that catalyzes the formation of phosphodiester linkages between 5'-phosphoryl and 3'-hydroxyl groups in double-stranded DNA using NAD as a coenzyme and as the energy source for the reaction. It is essential for DNA replication and repair of damaged DNA. This Francisella tularensis subsp. holarctica (strain FTNF002-00 / FTA) protein is DNA ligase.